Consider the following 362-residue polypeptide: 2-oxoglutarate-dependent dioxygenase lolO2 (362 aa).

The Fe2OG dioxygenase domain occupies 199 to 312; the sequence is TWNYFLGQPV…RYSLVFFGHL (114 aa). Residues H222, D224, and H280 each coordinate Fe cation. R303 provides a ligand contact to 2-oxoglutarate.

Belongs to the iron/ascorbate-dependent oxidoreductase family. Fe(2+) serves as cofactor.

Its pathway is alkaloid biosynthesis. 2-oxoglutarate-dependent dioxygenase; part of the gene cluster that mediates the biosynthesis of loline alkaloids, potent insecticidal agents composed of a pyrrolizidine ring system and an uncommon ether bridge linking carbons 2 and 7. Lolines are structurally differentiated by the various modifications of the L-amino group and include norloline, loline, N-methylloline, N-acetylloline, N-acetylnorloline, and N-formylloline. The first committed step is the condensation of O-acetyl-L-homoserine (derived from L-aspartic acid) and L-proline, probably catalyzed by the gamma-type pyridoxal 5'-phosphate(PLP)-dependent enzyme lolC, to give the diamino diacid, NACPP. Ensuing cyclization, decarboxylation, and acetylation steps yield 1-exo-acetamidopyrrolizidine (AcAP). LolO is required for installation of the ether bridge upon the pathway intermediate, 1-exo-acetamidopyrrolizidine (AcAP). In sequential 2-oxoglutarate- and O(2)-consuming steps, lolO removes hydrogens from C2 and C7 of AcAP to form both carbon-oxygen bonds in N-acetylnorloline (NANL), the precursor to all other lolines. The enzymes lolD, lolE, lolF and lolT have also been proposed to be involved in the ether-bridge installation. Further processing of the exocyclic moiety of NANL by fungal N-acetamidase (LolN), methyltransferase (LolM), and cytochrome P450 (LolP) enzymes, with occasional involvement of a plant acetyltransferase, generates the other known lolines. LolN transforms NANL to norlonine which is monomethylated and dimethylated to respectively lonine and N-methyllonine (NML) by lolM. LolP catalyzes hydroxylation of the methyl group in N-methylloline (NML) and further oxygenation to N-formylloline (NFL). A plant acetyltransferase is responsible for the acetylation of loline to form N-acetylloline (NAL). LolA might interact with aspartate kinase to prevent feedback inhibition of its activity by these end products and thereby promote production of L-homoserine from L-aspartate. The polypeptide is 2-oxoglutarate-dependent dioxygenase lolO2 (Epichloe uncinata (Endophyte fungus)).